A 253-amino-acid chain; its full sequence is Small ribosomal subunit protein uS3 (253 aa).

In terms of domain architecture, KH type-2 spans 21–92 (LNEFLTRELA…SVELYAEKVA (72 aa)). Residues 211-253 (VEPKDEILPTTPISEQKGGKPDPQVPQQPPQQPPAMPPPVPTA) are disordered. Positions 233–253 (PQVPQQPPQQPPAMPPPVPTA) are enriched in pro residues.

Belongs to the universal ribosomal protein uS3 family.

The protein localises to the cytoplasm. It is found in the nucleus. The protein resides in the nucleolus. Its subcellular location is the mitochondrion inner membrane. It localises to the cytoskeleton. The protein localises to the spindle. It catalyses the reaction 2'-deoxyribonucleotide-(2'-deoxyribose 5'-phosphate)-2'-deoxyribonucleotide-DNA = a 3'-end 2'-deoxyribonucleotide-(2,3-dehydro-2,3-deoxyribose 5'-phosphate)-DNA + a 5'-end 5'-phospho-2'-deoxyribonucleoside-DNA + H(+). Component of the small ribosomal subunit. The ribosome is a large ribonucleoprotein complex responsible for the synthesis of proteins in the cell. Has endonuclease activity and plays a role in repair of damaged DNA. Also involved in other processes including regulation of transcription, translation of its cognate mRNA, spindle formation and chromosome movement during mitosis, and apoptosis. In Ambystoma mexicanum (Axolotl), this protein is Small ribosomal subunit protein uS3 (RPS3).